The following is a 418-amino-acid chain: Serine protease inhibitor A3N (418 aa).

An N-terminal signal peptide occupies residues 1–29 (MTRLVTLELLMAGIGSALLCFPDCILGED). Residue S93 is modified to Phosphoserine. N-linked (GlcNAc...) asparagine glycosylation is found at N104, N258, and N269. The interval 367-394 (GTEAAAATGVKFVPMSAKLDPLIIAFDR) is RCL.

The protein belongs to the serpin family. In terms of processing, N-glycosylated. Liver.

Its subcellular location is the secreted. This chain is Serine protease inhibitor A3N (Serpina3n), found in Rattus norvegicus (Rat).